A 125-amino-acid chain; its full sequence is Small ribosomal subunit protein uS12 (125 aa).

At Asp89 the chain carries 3-methylthioaspartic acid.

This sequence belongs to the universal ribosomal protein uS12 family. As to quaternary structure, part of the 30S ribosomal subunit. Contacts proteins S8 and S17. May interact with IF1 in the 30S initiation complex.

With S4 and S5 plays an important role in translational accuracy. In terms of biological role, interacts with and stabilizes bases of the 16S rRNA that are involved in tRNA selection in the A site and with the mRNA backbone. Located at the interface of the 30S and 50S subunits, it traverses the body of the 30S subunit contacting proteins on the other side and probably holding the rRNA structure together. The combined cluster of proteins S8, S12 and S17 appears to hold together the shoulder and platform of the 30S subunit. The sequence is that of Small ribosomal subunit protein uS12 from Clostridium botulinum (strain Alaska E43 / Type E3).